Consider the following 120-residue polypeptide: uncharacterized protein (120 aa).

This is an uncharacterized protein from Aquifex aeolicus (strain VF5).